We begin with the raw amino-acid sequence, 484 residues long: Glycogen synthase (484 aa).

Lysine 15 contacts ADP-alpha-D-glucose.

It belongs to the glycosyltransferase 1 family. Bacterial/plant glycogen synthase subfamily.

The catalysed reaction is [(1-&gt;4)-alpha-D-glucosyl](n) + ADP-alpha-D-glucose = [(1-&gt;4)-alpha-D-glucosyl](n+1) + ADP + H(+). Its pathway is glycan biosynthesis; glycogen biosynthesis. Synthesizes alpha-1,4-glucan chains using ADP-glucose. This is Glycogen synthase from Bacillus licheniformis (strain ATCC 14580 / DSM 13 / JCM 2505 / CCUG 7422 / NBRC 12200 / NCIMB 9375 / NCTC 10341 / NRRL NRS-1264 / Gibson 46).